The following is a 478-amino-acid chain: Adenosylhomocysteinase (478 aa).

Substrate is bound by residues Thr-57, Asp-139, and Glu-201. 202–204 (TTT) is a binding site for NAD(+). 2 residues coordinate substrate: Lys-231 and Asp-235. NAD(+) is bound by residues Asn-236, 265–270 (GYGDVG), Glu-288, Asn-323, 344–346 (IGH), and Asn-392.

It belongs to the adenosylhomocysteinase family. The cofactor is NAD(+).

It is found in the cytoplasm. It catalyses the reaction S-adenosyl-L-homocysteine + H2O = L-homocysteine + adenosine. It participates in amino-acid biosynthesis; L-homocysteine biosynthesis; L-homocysteine from S-adenosyl-L-homocysteine: step 1/1. Functionally, may play a key role in the regulation of the intracellular concentration of adenosylhomocysteine. This chain is Adenosylhomocysteinase, found in Corynebacterium efficiens (strain DSM 44549 / YS-314 / AJ 12310 / JCM 11189 / NBRC 100395).